A 377-amino-acid chain; its full sequence is Mitochondrial pyrimidine nucleotide transporter RIM2 (377 aa).

Solcar repeat units follow at residues 50-163 (VKPW…TKDM), 173-262 (ETPM…MKRL), and 286-375 (KEWC…VIRL). Helical transmembrane passes span 53–73 (WVHFVAGGIGGMAGAVVTCPF), 131–151 (GFRSLFKGLGPNLVGVIPARS), 179–199 (LMAAATAGWATATATNPIWLI), 238–258 (GLSASYLGSVEGILQWLLYEQ), 286–306 (KEWCQRSGSAGLAKFVASIAT), and 347–368 (MYSGLTPHLMRTVPNSIIMFGT).

The protein belongs to the mitochondrial carrier (TC 2.A.29) family.

It localises to the mitochondrion inner membrane. It catalyses the reaction 5-methyl-UTP(out) + UTP(in) = 5-methyl-UTP(in) + UTP(out). Its function is as follows. Mitochondrial transporter that imports/exports pyrimidine nucleotides into and from mitochondria. Selectively transports uridine, thymidine, and cytosine (deoxy)nucleoside di- and triphosphates by an antiport mechanism. Also transports, with lower efficiency, uridine, thymidine, and cytosine (deoxy)nucleoside monophosphates as well as guanosine (deoxy)nucleoside di- and triphosphate. May import (deoxy)nucleoside triphosphates in exchange for intramitochondrial (deoxy)nucleoside monophosphates, thus providing precursors necessary for de novo synthesis of mitochondrial DNA and RNA while exporting products of their catabolism. Mediates the transport of iron and other divalent metal ions like copper and zinc across the mitochondrial inner membrane in a pyrimidine nucleotide-dependent fashion. Catalyzes the co-import of pyrimidine nucleotides and divalent metal ions including ferrous iron. Participates in mitochondrial genome maintenance, regulation of mitochondrial membrane potential and mitochondrial respiration. The sequence is that of Mitochondrial pyrimidine nucleotide transporter RIM2 (RIM2) from Saccharomyces cerevisiae (strain ATCC 204508 / S288c) (Baker's yeast).